Here is a 263-residue protein sequence, read N- to C-terminus: tRNA (guanine-N(7)-)-methyltransferase (263 aa).

A disordered region spans residues 1–33 (MSDHGRMHSTGSEVAAPVAPDPDTEGVHPHFNR). Glu-89, Glu-114, Asp-146, and Asp-169 together coordinate S-adenosyl-L-methionine. Residue Asp-169 is part of the active site. Residues Lys-173, Asp-205, and 242-245 (TKYE) contribute to the substrate site.

This sequence belongs to the class I-like SAM-binding methyltransferase superfamily. TrmB family.

The enzyme catalyses guanosine(46) in tRNA + S-adenosyl-L-methionine = N(7)-methylguanosine(46) in tRNA + S-adenosyl-L-homocysteine. The protein operates within tRNA modification; N(7)-methylguanine-tRNA biosynthesis. Catalyzes the formation of N(7)-methylguanine at position 46 (m7G46) in tRNA. The protein is tRNA (guanine-N(7)-)-methyltransferase of Mycolicibacterium gilvum (strain PYR-GCK) (Mycobacterium gilvum (strain PYR-GCK)).